We begin with the raw amino-acid sequence, 329 residues long: MSELVTLKTYLGTWAGADTGRTAVAQAVTAIAEAGVGIADLVARGPLEEGLASIRGVDPNAGGDAQKELDVVAEERIKAALLPTPTAFLASEESEELIPLNPDGRLVIAVDPLDGSSNIDTNVSVGTIYSILPYDAAVHTDPVSAVMRPGVNQVASGFLAYGPATILVATFGEGTQVFVHDRQTGEFVLARTNVEIPAETKEYGVNQSNVRHWAEPMSAYIADCLAGKDGPRGKDFNMRWVGSMVADAFRIFTRGGVYVYPGDKRKGYENGRLRLIYEANPVAFLTEQAKGAATDGKTRILDIQPHHIHQRIPLVFGSKAEVEKIASYY.

The Mg(2+) site is built by E92, D111, L113, and D114. Substrate is bound by residues 114-117 (DGSS) and N206. Mg(2+) is bound at residue E278.

Belongs to the FBPase class 1 family. In terms of assembly, homotetramer. The cofactor is Mg(2+).

It is found in the cytoplasm. The catalysed reaction is beta-D-fructose 1,6-bisphosphate + H2O = beta-D-fructose 6-phosphate + phosphate. Its pathway is carbohydrate biosynthesis; gluconeogenesis. The polypeptide is Fructose-1,6-bisphosphatase class 1 2 (Xanthobacter autotrophicus (strain ATCC BAA-1158 / Py2)).